The following is a 694-amino-acid chain: Elongation factor G (694 aa).

The region spanning 8-284 (EKLRNIGIVA…AVIDFLPSPV (277 aa)) is the tr-type G domain. GTP is bound by residues 17 to 24 (AHIDAGKT), 81 to 85 (DTPGH), and 135 to 138 (NKMD).

Belongs to the TRAFAC class translation factor GTPase superfamily. Classic translation factor GTPase family. EF-G/EF-2 subfamily.

The protein resides in the cytoplasm. Its function is as follows. Catalyzes the GTP-dependent ribosomal translocation step during translation elongation. During this step, the ribosome changes from the pre-translocational (PRE) to the post-translocational (POST) state as the newly formed A-site-bound peptidyl-tRNA and P-site-bound deacylated tRNA move to the P and E sites, respectively. Catalyzes the coordinated movement of the two tRNA molecules, the mRNA and conformational changes in the ribosome. The protein is Elongation factor G of Persephonella marina (strain DSM 14350 / EX-H1).